We begin with the raw amino-acid sequence, 317 residues long: Melanocyte-stimulating hormone receptor (317 aa).

The Extracellular portion of the chain corresponds to Met1–Glu37. Asn15 and Asn29 each carry an N-linked (GlcNAc...) asparagine glycan. A helical transmembrane segment spans residues Val38–Ile63. Over Ala64 to Pro72 the chain is Cytoplasmic. Residues Met73–Leu93 form a helical membrane-spanning segment. At Glu94–Asn118 the chain is on the extracellular side. Residues Val119–Met140 traverse the membrane as a helical segment. The Cytoplasmic portion of the chain corresponds to Asp141–Trp163. A helical membrane pass occupies residues Ala164–Tyr183. Residues Asp184–Cys191 lie on the Extracellular side of the membrane. Residues Leu192 to Leu211 traverse the membrane as a helical segment. At Thr212 to Ala240 the chain is on the cytoplasmic side. A helical membrane pass occupies residues Ala241–Val266. Residues Cys267–Asn279 are Extracellular-facing. Residues Phe280 to Phe300 traverse the membrane as a helical segment. Residues Arg301–Trp317 lie on the Cytoplasmic side of the membrane.

It belongs to the G-protein coupled receptor 1 family. As to quaternary structure, interacts with MGRN1, but does not undergo MGRN1-mediated ubiquitination; this interaction competes with GNAS-binding and thus inhibits agonist-induced cAMP production. Interacts with OPN3; the interaction results in a decrease in MC1R-mediated cAMP signaling and ultimately a decrease in melanin production in melanocytes.

It localises to the cell membrane. Functionally, receptor for MSH (alpha, beta and gamma) and ACTH. The activity of this receptor is mediated by G proteins which activate adenylate cyclase. Mediates melanogenesis, the production of eumelanin (black/brown) and phaeomelanin (red/yellow), via regulation of cAMP signaling in melanocytes. In Galago senegalensis (Northern lesser bushbaby), this protein is Melanocyte-stimulating hormone receptor (MC1R).